The chain runs to 569 residues: MPKQADYTWGAKKNLDTIACLPEDVKQFKDLLYAMYGFTATEEEPTSEVHPGAILKGTVVDISKDFVVVDVGLKSEGVIPMSEFIDSSEGLTVGAEVEVYLDQTEDDEGKVVLSREKATRQRQWEYILAHCEEGSIVKGQITRKVKGGLIVDIGMEAFLPGSQIDNKKIKNLDDYVGKVCEFKILKINVDRRNVVVSRRELLEAERISKKAELIEQITIGERRKGIVKNITDFGVFLDLDGIDGLLHITDMTWKRIRHPSEMVELNQELEVIILSVDKEKGRVALGLKQKEHNPWEDIEKKYPPGKRVRGKIVKLLPYGAFIEIEEGIEGLIHVSEMSWVKNIVDPNEVVNKGDEVEVVVLSIQKDEGKISLGLKQTKHNPWDNIEEKYPIGLRVTAEIKNLTNYGAFVELEPGIEGLIHISDMSWIKKVSHPSELFKKGNTVEAVILSVDKESKKITLGVKQLTPNPWDEIEVMFPVGSDISGVVTKITAFGAFVELQNGIEGLIHVSELSEKPFAKIEDVLSIGDKVSAKVIKLDPDHKKVSLSIKEFLVHGGDAGHDAEEESSDRD.

6 consecutive S1 motif domains span residues 52 to 116, 134 to 199, 220 to 288, 305 to 375, 392 to 462, and 479 to 548; these read GAIL…LSRE, GSIV…VSRR, GERR…LGLK, GKRV…LGLK, GLRV…LGVK, and GSDI…LSIK.

Belongs to the bacterial ribosomal protein bS1 family.

Binds mRNA; thus facilitating recognition of the initiation point. It is needed to translate mRNA with a short Shine-Dalgarno (SD) purine-rich sequence. This Chlamydia trachomatis serovar D (strain ATCC VR-885 / DSM 19411 / UW-3/Cx) protein is Small ribosomal subunit protein bS1 (rpsA).